The chain runs to 489 residues: CDK5RAP3 protein homolog (489 aa).

This sequence belongs to the CDK5RAP3 family.

Functionally, substrate adapter of E3 ligase complexes mediating ufmylation, the covalent attachment of the ubiquitin-like modifier UFM1 to substrate proteins, and which is involved in various processes, such as ribosome recycling and reticulophagy (also called ER-phagy). The chain is CDK5RAP3 protein homolog from Caenorhabditis elegans.